Consider the following 1349-residue polypeptide: Protein turtle homolog B (1349 aa).

A signal peptide spans 1–20; that stretch reads MIWYVATFIASVIGTRGLAA. The Extracellular portion of the chain corresponds to 21-722; sequence EGAHGLREEP…DLTEDGLARP (702 aa). Ig-like domains are found at residues 24-129, 139-226, 228-320, 324-415, and 420-504; these read HGLR…HNGS, PTFT…LLVQ, PPFI…AYLT, PARV…ARLV, and PYFT…THLT. Cystine bridges form between C45–C113 and C161–C208. 2 N-linked (GlcNAc...) asparagine glycosylation sites follow: N241 and N258. 3 disulfides stabilise this stretch: C250–C303, C346–C397, and C442–C488. Fibronectin type-III domains are found at residues 512 to 604 and 614 to 708; these read APGS…TLAF and LVTP…STDI. N624 is a glycosylation site (N-linked (GlcNAc...) asparagine). The helical transmembrane segment at 723–743 threads the bilayer; it reads VLAGIVATICFLAAAILFSTL. Residues 744 to 1349 are Cytoplasmic-facing; that stretch reads AACFVNKQRK…SPPERALSKL (606 aa). 3 disordered regions span residues 758 to 817, 911 to 1081, and 1099 to 1349; these read RKKD…EKEL, QLTP…RGLP, and APKG…LSKL. S775, S783, and S794 each carry phosphoserine. The segment covering 911-921 has biased composition (polar residues); sequence QLTPLSSSQES. Residues 985 to 998 are compositionally biased toward low complexity; it reads VPEVGSPLSSVMSS. Composition is skewed to polar residues over residues 1018-1033, 1129-1141, and 1199-1214; these read ENAS…TPTG, LVSQ…TSQG, and SRLS…SRTG. An Omega-N-methylarginine modification is found at R1136. Phosphoserine occurs at positions 1207 and 1215. Positions 1251-1271 are enriched in low complexity; sequence STPSTGSPSQSSRSGSPSYRP. Pro residues predominate over residues 1283–1292; sequence PSPPPGPAPA.

Belongs to the immunoglobulin superfamily. Turtle family. As to quaternary structure, found in a complex with MAGI2 and NLGN2, where it interacts with MAGI2 (via PDZ 5 and PDZ 6 domains). In terms of processing, N-glycosylated and sialylated. Not significantly O-glycosylated.

Its subcellular location is the postsynaptic cell membrane. The protein resides in the postsynaptic density. Transmembrane protein which is abundantly expressed in interneurons, where it may regulate inhibitory synapse development. May mediate homophilic cell adhesion. The polypeptide is Protein turtle homolog B (IGSF9B) (Homo sapiens (Human)).